The primary structure comprises 723 residues: FACT complex subunit Ssrp1 (723 aa).

Serine 443 is subject to Phosphoserine. 2 disordered regions span residues 459-564 (EARE…AFML) and 586-723 (AKKG…EASD). 2 stretches are compositionally biased toward acidic residues: residues 464 to 478 (EEDD…ESTD) and 486 to 507 (NESD…DDSD). Basic residues predominate over residues 531-557 (KKEKKHKEKERTKKPSKKKKDSGKPKR). The HMG box DNA-binding region spans 555–621 (PKRATTAFML…RYHDEMRNYK (67 aa)). Positions 586–621 (AKKGGEMWKELKDKSKWEDAAAKDKQRYHDEMRNYK) are enriched in basic and acidic residues. Serine 628 carries the phosphoserine modification. Residues 644 to 656 (PSPSKKANTSGSG) are compositionally biased toward polar residues. Serine 664 and serine 668 each carry phosphoserine. The span at 664-676 (SDDDSTSSDDEKD) shows a compositional bias: acidic residues. Threonine 669 bears the Phosphothreonine mark. 2 positions are modified to phosphoserine: serine 670 and serine 671. Over residues 677-692 (NEPAKKKSKPPSDGDA) the composition is skewed to basic and acidic residues. Residues 702–723 (EPEESEEDSNASDEDEEDEASD) show a composition bias toward acidic residues.

The protein belongs to the SSRP1 family. Component of the FACT complex, a stable heterodimer of dre4/spt16 and Ssrp. Interacts with CHD1 and TRL/GAGA. In terms of tissue distribution, expressed at highest levels in nurse cells of the ovary.

It localises to the nucleus. It is found in the chromosome. The protein resides in the nucleolus. Component of the FACT complex, a general chromatin factor that acts to reorganize nucleosomes. The FACT complex is involved in multiple processes that require DNA as a template such as mRNA elongation, DNA replication and DNA repair. During transcription elongation the FACT complex acts as a histone chaperone that both destabilizes and restores nucleosomal structure. It facilitates the passage of RNA polymerase II and transcription by promoting the dissociation of one histone H2A-H2B dimer from the nucleosome, then subsequently promotes the reestablishment of the nucleosome following the passage of RNA polymerase II. Binds specifically to single-stranded DNA and RNA with highest affinity for nucleotides G and U. The FACT complex is required for expression of Hox genes. The sequence is that of FACT complex subunit Ssrp1 (Ssrp) from Drosophila melanogaster (Fruit fly).